The sequence spans 324 residues: NADH-ubiquinone oxidoreductase chain 1 (324 aa).

8 helical membrane passes run 10-30 (MIMT…LTLV), 76-96 (FLFI…WIPL), 107-127 (LGLL…LWSG), 143-163 (VAQT…TIML), 178-198 (PIYL…STLA), 229-249 (LFFL…ITLF), 260-280 (ELFS…FLWV), and 300-320 (FLPL…SYAG).

Belongs to the complex I subunit 1 family.

The protein resides in the mitochondrion inner membrane. It catalyses the reaction a ubiquinone + NADH + 5 H(+)(in) = a ubiquinol + NAD(+) + 4 H(+)(out). Functionally, core subunit of the mitochondrial membrane respiratory chain NADH dehydrogenase (Complex I) that is believed to belong to the minimal assembly required for catalysis. Complex I functions in the transfer of electrons from NADH to the respiratory chain. The immediate electron acceptor for the enzyme is believed to be ubiquinone. This Excalfactoria chinensis (Blue-breasted quail) protein is NADH-ubiquinone oxidoreductase chain 1 (MT-ND1).